The sequence spans 96 residues: Co-chaperonin GroES (96 aa).

This sequence belongs to the GroES chaperonin family. As to quaternary structure, heptamer of 7 subunits arranged in a ring. Interacts with the chaperonin GroEL.

It is found in the cytoplasm. Functionally, together with the chaperonin GroEL, plays an essential role in assisting protein folding. The GroEL-GroES system forms a nano-cage that allows encapsulation of the non-native substrate proteins and provides a physical environment optimized to promote and accelerate protein folding. GroES binds to the apical surface of the GroEL ring, thereby capping the opening of the GroEL channel. In Geotalea daltonii (strain DSM 22248 / JCM 15807 / FRC-32) (Geobacter daltonii), this protein is Co-chaperonin GroES.